The primary structure comprises 162 residues: Protein NrdI (162 aa).

The protein belongs to the NrdI family.

Its function is as follows. Probably involved in ribonucleotide reductase function. This Streptococcus pyogenes serotype M2 (strain MGAS10270) protein is Protein NrdI.